The chain runs to 365 residues: L-lactate oxidase (365 aa).

One can recognise an FMN hydroxy acid dehydrogenase domain in the interval 6 to 365 (RIPPGVWNAI…ITHDTLTPSC (360 aa)). Residue tyrosine 32 coordinates pyruvate. FMN-binding positions include 85–87 (PVA), serine 114, and glutamine 135. A pyruvate-binding site is contributed by tyrosine 137. FMN-binding residues include threonine 163, lysine 237, and serine 259. Pyruvate is bound by residues histidine 261 and arginine 264. Catalysis depends on histidine 261, which acts as the Proton acceptor. FMN is bound by residues 292-296 (DGGVR) and arginine 316.

It belongs to the FMN-dependent alpha-hydroxy acid dehydrogenase family. In terms of assembly, homotetramer. Requires FMN as cofactor.

It carries out the reaction (S)-lactate + O2 = pyruvate + H2O2. The enzyme catalyses glycolate + O2 = glyoxylate + H2O2. Functionally, catalyzes the oxidation of (S)-lactate (L-lactate) to pyruvate, with a reduction of O2 to H2O2. To a lesser extent is also able to use glycolate as substrate. In Alicycliphilus denitrificans (strain DSM 14773 / CIP 107495 / K601), this protein is L-lactate oxidase.